The primary structure comprises 146 residues: Probable calcium-binding protein CML32 (146 aa).

4 consecutive EF-hand domains span residues 1 to 33, 34 to 69, 73 to 108, and 109 to 144; these read MSVA…FSPS, ITSE…GGEG, DEDI…LGEK, and QTIA…NNKK. Residues Asp11, Asn13, Asp15, Lys17, Glu22, Asp47, Asp49, Asp51, Gln53, Glu58, Asp86, Asp88, Asp90, Lys92, Glu97, Asp122, Asp124, Asp126, and Glu133 each coordinate Ca(2+).

In terms of biological role, potential calcium sensor. The sequence is that of Probable calcium-binding protein CML32 (CML32) from Arabidopsis thaliana (Mouse-ear cress).